The chain runs to 639 residues: Bone morphogenetic protein 1 homolog (639 aa).

Positions 1 to 23 (MDLLYYMTVSLLGFILSLTTFIG) are cleaved as a signal peptide. The propeptide occupies 24–109 (ETTRALSDDV…RAVTARPERR (86 aa)). Residues 100-305 (RAVTARPERR…IQANLLYKCP (206 aa)) enclose the Peptidase M12A domain. 2 N-linked (GlcNAc...) asparagine glycosylation sites follow: asparagine 122 and asparagine 140. 6 cysteine pairs are disulfide-bonded: cysteine 143/cysteine 304, cysteine 167/cysteine 189, cysteine 169/cysteine 170, cysteine 307/cysteine 333, cysteine 360/cysteine 382, and cysteine 420/cysteine 446. Position 197 (histidine 197) interacts with Zn(2+). The active site involves glutamate 198. Residues histidine 201 and histidine 207 each coordinate Zn(2+). 2 CUB domains span residues 307-419 (CGRT…YEAI) and 420-531 (CGGH…DFFK). N-linked (GlcNAc...) asparagine glycosylation occurs at asparagine 317. Asparagine 455 is a glycosylation site (N-linked (GlcNAc...) asparagine). 4 cysteine pairs are disulfide-bonded: cysteine 473–cysteine 495, cysteine 536–cysteine 548, cysteine 544–cysteine 557, and cysteine 559–cysteine 572. An EGF-like; calcium-binding domain is found at 532–573 (EKDECAQPDQGGCMDVCVNTIGSYRCDCRPGYELSSDGRRCE).

Requires Zn(2+) as cofactor. Ectodermal and primary mesenchyme cells in hatched blastula.

This is Bone morphogenetic protein 1 homolog from Strongylocentrotus purpuratus (Purple sea urchin).